We begin with the raw amino-acid sequence, 569 residues long: Protein GPR108 (569 aa).

The signal sequence occupies residues 1-34 (MAVSERRGLSGESPTQCRWGYLSLLVLTLSGCSG). N-linked (GlcNAc...) asparagine glycans are attached at residues Asn-59, Asn-111, and Asn-182. The disordered stretch occupies residues 144 to 219 (LLPEAPTQSG…DPSGKEKDQV (76 aa)). A compositionally biased stretch (polar residues) spans 180 to 192 (KENQTAPQVSGDK). Positions 194–203 (TPGEHRHSSE) are enriched in basic and acidic residues. Residues Asn-226 and Asn-230 are each glycosylated (N-linked (GlcNAc...) asparagine). 7 helical membrane-spanning segments follow: residues 289–309 (LYLI…SVLC), 318–338 (IHWL…FHSI), 362–382 (LLKG…WAFV), 393–413 (IFGI…VIES), 427–447 (ILFL…VWSI), 475–495 (VMVI…QVAV), and 499–519 (WQWL…VLTG).

Belongs to the LU7TM family. In terms of tissue distribution, high expression in spleen, lung, stomach, large and small intestine, and thymus.

The protein resides in the golgi apparatus. It is found in the cis-Golgi network membrane. Its subcellular location is the trans-Golgi network membrane. The protein localises to the golgi apparatus membrane. Functionally, may play a role in intracellular immune modulation by activating NF-kappaB response and attenuating Toll-like-receptor response. Its function is as follows. (Microbial infection) Plays an essential function in adeno-associated virus (AAV) transduction, across multiple serotypes except AAV5. May play a critical role in mediating the endosomal virus escape or in the AAV virions trafficking from endosomes to the nucleus. The chain is Protein GPR108 (Gpr108) from Mus musculus (Mouse).